We begin with the raw amino-acid sequence, 143 residues long: Transmembrane protein 80 (143 aa).

4 helical membrane-spanning segments follow: residues 21-41, 55-75, 99-119, and 121-141; these read MLFY…LLMI, LVLD…RLYL, ALLS…DWAL, and ATLL…IAAF.

It is found in the membrane. The protein localises to the cell projection. The protein resides in the cilium. In Homo sapiens (Human), this protein is Transmembrane protein 80.